An 874-amino-acid polypeptide reads, in one-letter code: Alanine--tRNA ligase (874 aa).

The Zn(2+) site is built by H564, H568, C665, and H669.

It belongs to the class-II aminoacyl-tRNA synthetase family. Zn(2+) serves as cofactor.

Its subcellular location is the cytoplasm. It catalyses the reaction tRNA(Ala) + L-alanine + ATP = L-alanyl-tRNA(Ala) + AMP + diphosphate. Its function is as follows. Catalyzes the attachment of alanine to tRNA(Ala) in a two-step reaction: alanine is first activated by ATP to form Ala-AMP and then transferred to the acceptor end of tRNA(Ala). Also edits incorrectly charged Ser-tRNA(Ala) and Gly-tRNA(Ala) via its editing domain. In Burkholderia orbicola (strain MC0-3), this protein is Alanine--tRNA ligase.